Consider the following 292-residue polypeptide: Elongation factor Ts (292 aa).

The tract at residues 80-83 (TDFV) is involved in Mg(2+) ion dislocation from EF-Tu.

This sequence belongs to the EF-Ts family.

Its subcellular location is the cytoplasm. In terms of biological role, associates with the EF-Tu.GDP complex and induces the exchange of GDP to GTP. It remains bound to the aminoacyl-tRNA.EF-Tu.GTP complex up to the GTP hydrolysis stage on the ribosome. This Cupriavidus pinatubonensis (strain JMP 134 / LMG 1197) (Cupriavidus necator (strain JMP 134)) protein is Elongation factor Ts.